The sequence spans 492 residues: Probable cobyric acid synthase (492 aa).

One can recognise a GATase cobBQ-type domain in the interval 252–444 (PIEVNVVKFS…FHGILENFEF (193 aa)). The active-site Nucleophile is the Cys330. Residue His436 is part of the active site.

The protein belongs to the CobB/CobQ family. CobQ subfamily.

It functions in the pathway cofactor biosynthesis; adenosylcobalamin biosynthesis. In terms of biological role, catalyzes amidations at positions B, D, E, and G on adenosylcobyrinic A,C-diamide. NH(2) groups are provided by glutamine, and one molecule of ATP is hydrogenolyzed for each amidation. This Methanococcus maripaludis (strain DSM 14266 / JCM 13030 / NBRC 101832 / S2 / LL) protein is Probable cobyric acid synthase.